The chain runs to 193 residues: Ribonuclease HII (193 aa).

Residues 1 to 193 enclose the RNase H type-2 domain; sequence MTLGIDEAGR…SFALKNNWFS (193 aa). A divalent metal cation is bound by residues D6, E7, and D103.

This sequence belongs to the RNase HII family. The cofactor is Mn(2+). Mg(2+) is required as a cofactor.

Its subcellular location is the cytoplasm. The catalysed reaction is Endonucleolytic cleavage to 5'-phosphomonoester.. Functionally, endonuclease that specifically degrades the RNA of RNA-DNA hybrids. The protein is Ribonuclease HII of Helicobacter acinonychis (strain Sheeba).